The chain runs to 591 residues: Aspartate--tRNA(Asp/Asn) ligase (591 aa).

Residue glutamate 174 coordinates L-aspartate. An aspartate region spans residues 198–201 (QLFK). Position 220 (arginine 220) interacts with L-aspartate. ATP-binding positions include 220–222 (RDE) and glutamine 229. An L-aspartate-binding site is contributed by histidine 450. An ATP-binding site is contributed by glutamate 483. Residue arginine 490 coordinates L-aspartate. 535–538 (GLDR) provides a ligand contact to ATP.

This sequence belongs to the class-II aminoacyl-tRNA synthetase family. Type 1 subfamily. In terms of assembly, homodimer.

The protein resides in the cytoplasm. It catalyses the reaction tRNA(Asx) + L-aspartate + ATP = L-aspartyl-tRNA(Asx) + AMP + diphosphate. Aspartyl-tRNA synthetase with relaxed tRNA specificity since it is able to aspartylate not only its cognate tRNA(Asp) but also tRNA(Asn). Reaction proceeds in two steps: L-aspartate is first activated by ATP to form Asp-AMP and then transferred to the acceptor end of tRNA(Asp/Asn). This Pseudomonas fluorescens (strain SBW25) protein is Aspartate--tRNA(Asp/Asn) ligase.